The following is a 583-amino-acid chain: Inactive carboxylesterase-like protein VdtD (583 aa).

Residues 1–23 (MFMTQIVFGIAPTLLKTFSHLTA) form the signal peptide. N-linked (GlcNAc...) asparagine glycosylation is found at N84, N109, N221, N265, N307, N350, N388, N448, and N468.

This sequence belongs to the type-B carboxylesterase/lipase family.

The protein operates within secondary metabolite biosynthesis. In terms of biological role, inactive carboxylesterase-like protein; part of the gene cluster that mediates the biosynthesis of viriditoxin, one of the 'classical' secondary metabolites produced by fungi and that has antibacterial activity. The first step is performed by the polyketide synthase VdtA which condenses one acetyl-CoA and 6 malonyl-CoA units to form the heptaketide monomer backbone of viriditoxin. The product of VdtA is then O-methylated on C7 by the O-methyltransferase VdtC. The O-methyl group is important for the stereoselective coupling of the monomers at the final step of viriditoxin biosynthesis. The short-chain dehydrogenase/reductase VdtF then acts as a stereospecific reductase converting the pyrone to dihydropyrone via the reduction of the C3-C4 double bond. The FAD-binding monooxygenase VdtE then converts the ketone group into a methyl-ester group to yield semi-viriditoxin. Finally, the laccase VdtB is involved in dimerization of 2 semi-viriditoxin molecules to yield the final viriditoxin. VdtB is responsible for the regioselective 6,6'-coupling of semi-viriditoxin, which yields (M)-viriditoxin and (P)-viriditoxin at a ratio of 1:2. The non-catalytic carboxylesterase-like protein VdtD affects the stereochemistical outcome of the coupling. The highly reducing polyketide synthase VdtX is not involved in viriditoxin synthesis, but might possibly play a role in the production of additional metabolites not identified yet. This Byssochlamys spectabilis (Paecilomyces variotii) protein is Inactive carboxylesterase-like protein VdtD.